Here is a 119-residue protein sequence, read N- to C-terminus: MLPARNRMTRSTEFDATVKHGTRMAQPDIVVHLRRGSEPDDESAGPRVGLVVGKAVGTAVQRHRVARRLRHVARPLLGELQPSDRLVIRALPGSRTVSSARLAQELQRCLRRMPAGSGR.

This sequence belongs to the RnpA family. Consists of a catalytic RNA component (M1 or rnpB) and a protein subunit.

It catalyses the reaction Endonucleolytic cleavage of RNA, removing 5'-extranucleotides from tRNA precursor.. In terms of biological role, RNaseP catalyzes the removal of the 5'-leader sequence from pre-tRNA to produce the mature 5'-terminus. It can also cleave other RNA substrates such as 4.5S RNA. The protein component plays an auxiliary but essential role in vivo by binding to the 5'-leader sequence and broadening the substrate specificity of the ribozyme. The protein is Ribonuclease P protein component of Mycolicibacterium paratuberculosis (strain ATCC BAA-968 / K-10) (Mycobacterium paratuberculosis).